The primary structure comprises 416 residues: Glutamyl-tRNA reductase (416 aa).

Substrate-binding positions include 49–52 (TCNR), Ser-105, 110–112 (EPQ), and Gln-116. The active-site Nucleophile is the Cys-50. 185–190 (GAGETI) contacts NADP(+).

This sequence belongs to the glutamyl-tRNA reductase family. In terms of assembly, homodimer.

It carries out the reaction (S)-4-amino-5-oxopentanoate + tRNA(Glu) + NADP(+) = L-glutamyl-tRNA(Glu) + NADPH + H(+). The protein operates within porphyrin-containing compound metabolism; protoporphyrin-IX biosynthesis; 5-aminolevulinate from L-glutamyl-tRNA(Glu): step 1/2. In terms of biological role, catalyzes the NADPH-dependent reduction of glutamyl-tRNA(Glu) to glutamate 1-semialdehyde (GSA). The sequence is that of Glutamyl-tRNA reductase from Shewanella putrefaciens (strain CN-32 / ATCC BAA-453).